The following is a 263-amino-acid chain: Protein YpjB (263 aa).

Positions 233–244 (DFDDSSSEDDPV) are enriched in acidic residues. The tract at residues 233-263 (DFDDSSSEDDPVENSPVVTSPVVSSSKSSFQ) is disordered. Residues 245–263 (ENSPVVTSPVVSSSKSSFQ) are compositionally biased toward low complexity.

The chain is Protein YpjB (ypjB) from Escherichia coli (strain K12).